The primary structure comprises 548 residues: Probable bifunctional tRNA threonylcarbamoyladenosine biosynthesis protein (548 aa).

A kae1 region spans residues 1–338 (MRILGIEGTA…FRPDEVAVTW (338 aa)). Residues histidine 122 and histidine 126 each contribute to the Fe cation site. Residues 143–147 (NASGA), aspartate 175, glycine 188, glutamate 192, and asparagine 271 each bind L-threonylcarbamoyladenylate. Aspartate 299 provides a ligand contact to Fe cation. The Protein kinase domain maps to 349-548 (RMGGDEVQGA…DDIEGRGRYQ (200 aa)). Residues 355 to 362 (VQGAEATV) and lysine 371 each bind ATP. A compositionally biased stretch (basic and acidic residues) spans 390 to 404 (ERTRQEARLTSEARR). Residues 390 to 413 (ERTRQEARLTSEARRNGVPTPLVR) are disordered. The active-site Proton acceptor; for kinase activity is the aspartate 460.

The protein in the N-terminal section; belongs to the KAE1 / TsaD family. It in the C-terminal section; belongs to the protein kinase superfamily. Tyr protein kinase family. BUD32 subfamily. In terms of assembly, component of the KEOPS complex that consists of Kae1, Bud32, Cgi121 and Pcc1; the whole complex dimerizes. Fe(2+) is required as a cofactor.

The protein resides in the cytoplasm. The catalysed reaction is L-seryl-[protein] + ATP = O-phospho-L-seryl-[protein] + ADP + H(+). The enzyme catalyses L-threonyl-[protein] + ATP = O-phospho-L-threonyl-[protein] + ADP + H(+). It carries out the reaction L-threonylcarbamoyladenylate + adenosine(37) in tRNA = N(6)-L-threonylcarbamoyladenosine(37) in tRNA + AMP + H(+). In terms of biological role, required for the formation of a threonylcarbamoyl group on adenosine at position 37 (t(6)A37) in tRNAs that read codons beginning with adenine. Is a component of the KEOPS complex that is probably involved in the transfer of the threonylcarbamoyl moiety of threonylcarbamoyl-AMP (TC-AMP) to the N6 group of A37. The Kae1 domain likely plays a direct catalytic role in this reaction. The Bud32 domain probably displays kinase activity that regulates Kae1 function. This Haloarcula marismortui (strain ATCC 43049 / DSM 3752 / JCM 8966 / VKM B-1809) (Halobacterium marismortui) protein is Probable bifunctional tRNA threonylcarbamoyladenosine biosynthesis protein.